A 258-amino-acid polypeptide reads, in one-letter code: Alpha- and beta-fibrinogenase stejnefibrase-1 (258 aa).

A signal peptide spans 1–18 (MELIRVLANLLILQLSYA). Positions 19 to 24 (QKSSEL) are excised as a propeptide. One can recognise a Peptidase S1 domain in the interval 25–249 (IIGGDECNID…HLDWIQNIIA (225 aa)). 6 cysteine pairs are disulfide-bonded: cysteine 31–cysteine 163, cysteine 50–cysteine 66, cysteine 98–cysteine 256, cysteine 142–cysteine 210, cysteine 174–cysteine 189, and cysteine 200–cysteine 225. The active-site Charge relay system is histidine 65. N-linked (GlcNAc...) asparagine glycosylation is present at asparagine 103. Catalysis depends on aspartate 110, which acts as the Charge relay system. 4 N-linked (GlcNAc...) asparagine glycosylation sites follow: asparagine 121, asparagine 122, asparagine 154, and asparagine 170. Serine 204 (charge relay system) is an active-site residue.

This sequence belongs to the peptidase S1 family. Snake venom subfamily. In terms of assembly, monomer. As to expression, expressed by the venom gland.

Its subcellular location is the secreted. Its activity is regulated as follows. Its activity is inhibited by PMSF and p-nitrophenyl-p-guanidinobenzoate (NPGB). Snake venom serine protease. Degrades concomitantly alpha- (FGA) and beta-chains of fibrinogen (FGB). The sequence is that of Alpha- and beta-fibrinogenase stejnefibrase-1 from Trimeresurus stejnegeri (Chinese green tree viper).